The primary structure comprises 770 residues: Protein PAT1 homolog 1 (770 aa).

The interval 1–42 (MFRYESLEDCPLDEDEDAFQGLGEEDEEIDQFNDDTFGSGAV) is disordered. Residues 1–84 (MFRYESLEDC…EMDLLGDHEE (84 aa)) are region A; interaction with DDX6/RCK. Residues 1–397 (MFRYESLEDC…HRVSHQDHLR (397 aa)) form an involved in nuclear foci localization region. Positions 7–33 (LEDCPLDEDEDAFQGLGEEDEEIDQFN) are enriched in acidic residues. The interval 85-388 (NLAERLSKMV…LNGTGDRGGH (304 aa)) is region N; interaction with decapping machinery. A Nuclear export signal motif is present at residues 86–95 (LAERLSKMVI). At Ser177 the chain carries Phosphoserine. Thr178 is subject to Phosphothreonine. 2 positions are modified to phosphoserine: Ser179 and Ser184. Position 194 is a phosphothreonine (Thr194). 3 positions are modified to asymmetric dimethylarginine: Arg217, Arg223, and Arg263. Residues 223-397 (RYPAPYGERM…HRVSHQDHLR (175 aa)) form an involved in RNA-binding region. Ser278 carries the phosphoserine modification. The residue at position 284 (Arg284) is an Asymmetric dimethylarginine. 2 disordered regions span residues 320 to 341 (SAPPPATPPPQQHPPGPGPHLQ) and 369 to 394 (QLQSRNQHRNLNGTGDRGGHRVSHQD). Pro residues predominate over residues 321-337 (APPPATPPPQQHPPGPG). Residues 369-380 (QLQSRNQHRNLN) show a composition bias toward low complexity. Residue Arg385 is modified to Omega-N-methylarginine. The span at 385–394 (RGGHRVSHQD) shows a compositional bias: basic and acidic residues. Residues 389–448 (RVSHQDHLRKDPYANLMLQREKDWVSKIQMMQLQSTDPYLDDFYYQNYFEKLEKSSAAEE) form a region H region. Residues 398-770 (KDPYANLMLQ…TKLQLVQGMR (373 aa)) are involved in nuclear speckle localization. Residues 449–770 (MQGDGPKKER…TKLQLVQGMR (322 aa)) form a region C region.

It belongs to the PAT1 family. As to quaternary structure, interacts (via region A) with DDX6/RCK. Interacts (via region H and region C) with LSM1 and LSM4. Interacts (via region N) with DCP1A, DCP2, EDC3, EDC4 and XRN1. Interacts with the CCR4-NOT complex. Interacts with the Lsm-containing SMN-Sm protein complex. Interacts with EIF4ENIF1/4E-T.

The protein resides in the cytoplasm. The protein localises to the P-body. It localises to the nucleus. It is found in the PML body. Its subcellular location is the nucleus speckle. Its function is as follows. RNA-binding protein involved in deadenylation-dependent decapping of mRNAs, leading to the degradation of mRNAs. Acts as a scaffold protein that connects deadenylation and decapping machinery. Required for cytoplasmic mRNA processing body (P-body) assembly. This chain is Protein PAT1 homolog 1 (Patl1), found in Rattus norvegicus (Rat).